Here is a 261-residue protein sequence, read N- to C-terminus: Kallikrein 1-related peptidase b26 (261 aa).

The N-terminal stretch at 1-18 (MWFLILFPALSLGGIDAA) is a signal peptide. Positions 19–24 (PPLQSR) are cleaved as a propeptide — activation peptide. Residues 25-258 (VVGGFNCEKN…FNSWIKDTMM (234 aa)) enclose the Peptidase S1 domain. Disulfide bonds link Cys-31-Cys-173, Cys-50-Cys-66, Cys-152-Cys-219, Cys-184-Cys-198, and Cys-209-Cys-234. His-65 serves as the catalytic Charge relay system. Asn-102 carries N-linked (GlcNAc...) asparagine glycosylation. The active-site Charge relay system is the Asp-120. Ser-213 acts as the Charge relay system in catalysis.

This sequence belongs to the peptidase S1 family. Kallikrein subfamily.

The enzyme catalyses Preferential cleavage of Arg-|-Xaa bonds in small molecule substrates. Highly selective action to release kallidin (lysyl-bradykinin) from kininogen involves hydrolysis of Met-|-Xaa or Leu-|-Xaa.. Functionally, glandular kallikreins cleave Met-Lys and Arg-Ser bonds in kininogen to release Lys-bradykinin. Prorenin-converting enzyme cleaves mouse REN-2 prorenin at a dibasic site to yield mature renin. This Mus musculus (Mouse) protein is Kallikrein 1-related peptidase b26 (Klk1b26).